Reading from the N-terminus, the 306-residue chain is MTSLPKVLFLMGPTASGKTALALDMAEHHNCEIISVDSALIYRGMDIGTAKPTASELARAPHKLIDILDPLESYSAADFRADAVREIEETLSRGKTPLLVGGTMMYFKTLLDGLSPLPSADDAVRAQIAAEVEARGWQALHDELRNIDPVSAERIHPNDPQRLSRAIEVYRISGKTLTELTKIKAESLPYHMVQFAIAPQDRTVLHGLIAKRFQQMLAEGFIGEVETLKARGDLHLELPSMRCVGYRQAWQYLDGEFDHATMVEKAVAATRQLAKRQLTWLRGWPELHWLASGDEGNLDKLVQQSR.

ATP is bound at residue 12-19 (GPTASGKT). 14–19 (TASGKT) lines the substrate pocket. Interaction with substrate tRNA stretches follow at residues 37–40 (DSAL), 161–165 (QRLSR), and 242–247 (RCVGYR).

This sequence belongs to the IPP transferase family. Monomer. Requires Mg(2+) as cofactor.

The catalysed reaction is adenosine(37) in tRNA + dimethylallyl diphosphate = N(6)-dimethylallyladenosine(37) in tRNA + diphosphate. Functionally, catalyzes the transfer of a dimethylallyl group onto the adenine at position 37 in tRNAs that read codons beginning with uridine, leading to the formation of N6-(dimethylallyl)adenosine (i(6)A). This chain is tRNA dimethylallyltransferase, found in Shewanella amazonensis (strain ATCC BAA-1098 / SB2B).